A 284-amino-acid chain; its full sequence is WUSCHEL-related homeobox 10 (284 aa).

The segment at 1 to 43 is disordered; sequence MDRTATASWEVMSRRGEQQQQLMMQAPASHNGGSGGGEPARSR. The homeobox; WUS-type DNA-binding region spans 39–103; that stretch reads PARSRWAPKP…NRRSRSRRRA (65 aa).

This sequence belongs to the WUS homeobox family.

The protein localises to the nucleus. Its function is as follows. Transcription factor which may be involved in developmental processes. The chain is WUSCHEL-related homeobox 10 (WOX10) from Oryza sativa subsp. japonica (Rice).